We begin with the raw amino-acid sequence, 663 residues long: COBRA-like protein 9 (663 aa).

A signal peptide spans 1–23 (MGVLLPIFFGVLLLFTVTPPSMS). 13 N-linked (GlcNAc...) asparagine glycosylation sites follow: asparagine 63, asparagine 111, asparagine 121, asparagine 169, asparagine 203, asparagine 326, asparagine 355, asparagine 397, asparagine 409, asparagine 429, asparagine 470, asparagine 550, and asparagine 561. The GPI-anchor amidated serine moiety is linked to residue serine 638. A propeptide spans 639 to 663 (GGRRNGAITVLSFITFYVAAFMVLL) (removed in mature form).

This sequence belongs to the COBRA family. As to expression, expressed only in flowers.

The protein localises to the cell membrane. This chain is COBRA-like protein 9 (COBL9), found in Arabidopsis thaliana (Mouse-ear cress).